Here is a 492-residue protein sequence, read N- to C-terminus: Pre-mRNA-processing factor 19 (492 aa).

The U-box domain maps to Met-1 to Ile-72. WD repeat units follow at residues His-207–Thr-246, Gly-249–Ile-288, Val-291–Lys-330, Gly-336–Ala-375, Gly-378–Thr-417, and Asp-461–Ser-491.

Belongs to the WD repeat PRP19 family. In terms of assembly, homotetramer. Component of the NTC complex (or PRP19-associated complex) which is associated with the spliceosome.

The protein localises to the nucleus. It is found in the nucleoplasm. It carries out the reaction S-ubiquitinyl-[E2 ubiquitin-conjugating enzyme]-L-cysteine + [acceptor protein]-L-lysine = [E2 ubiquitin-conjugating enzyme]-L-cysteine + N(6)-ubiquitinyl-[acceptor protein]-L-lysine.. It functions in the pathway protein modification; protein ubiquitination. Its function is as follows. Probable ubiquitin-protein ligase which is mainly involved pre-mRNA splicing and DNA repair. Core component of the NTC/Nineteen complex which is part of the spliceosome and participates in its assembly, its remodeling and is required for its activity. Together with emb-4, necessary for interaction of rnp-4, a probable exon junction complex component, with mRNAs and spliceosomal snRNAs. Plays a role in nuclear retention of unspliced mRNAs. The sequence is that of Pre-mRNA-processing factor 19 (prp-19) from Caenorhabditis elegans.